The primary structure comprises 172 residues: MHQLGIEWNKLIAQIINFVIVLWVLNRFAFKPVLKILEERRKKIAESLQNAEKIKQELAEAEEARKEILRKANEQASFIVAEAQKVASYQGEKKIQEAVEEAKRVLKKAEESAKLEREKAKEEMRREILNLVIEITSKVVGKTLTLDDQERLKNEVLSKLPQKEGHEAYSRN.

Residues 11–30 form a helical membrane-spanning segment; sequence LIAQIINFVIVLWVLNRFAF.

Belongs to the ATPase B chain family. F-type ATPases have 2 components, F(1) - the catalytic core - and F(0) - the membrane proton channel. F(1) has five subunits: alpha(3), beta(3), gamma(1), delta(1), epsilon(1). F(0) has three main subunits: a(1), b(2) and c(10-14). The alpha and beta chains form an alternating ring which encloses part of the gamma chain. F(1) is attached to F(0) by a central stalk formed by the gamma and epsilon chains, while a peripheral stalk is formed by the delta and b chains.

It localises to the cell inner membrane. Functionally, f(1)F(0) ATP synthase produces ATP from ADP in the presence of a proton or sodium gradient. F-type ATPases consist of two structural domains, F(1) containing the extramembraneous catalytic core and F(0) containing the membrane proton channel, linked together by a central stalk and a peripheral stalk. During catalysis, ATP synthesis in the catalytic domain of F(1) is coupled via a rotary mechanism of the central stalk subunits to proton translocation. In terms of biological role, component of the F(0) channel, it forms part of the peripheral stalk, linking F(1) to F(0). The chain is ATP synthase subunit b from Methylacidiphilum infernorum (isolate V4) (Methylokorus infernorum (strain V4)).